The sequence spans 447 residues: Signal recognition particle 54 kDa protein (447 aa).

Residues 103-110 (GVQGSGKT), 185-189 (DTAGR), and 245-248 (TKMD) each bind GTP.

This sequence belongs to the GTP-binding SRP family. SRP54 subfamily. As to quaternary structure, part of the signal recognition particle protein translocation system, which is composed of SRP and FtsY. Archaeal SRP consists of a 7S RNA molecule of 300 nucleotides and two protein subunits: SRP54 and SRP19.

It localises to the cytoplasm. The enzyme catalyses GTP + H2O = GDP + phosphate + H(+). In terms of biological role, involved in targeting and insertion of nascent membrane proteins into the cytoplasmic membrane. Binds to the hydrophobic signal sequence of the ribosome-nascent chain (RNC) as it emerges from the ribosomes. The SRP-RNC complex is then targeted to the cytoplasmic membrane where it interacts with the SRP receptor FtsY. The protein is Signal recognition particle 54 kDa protein of Saccharolobus solfataricus (strain ATCC 35092 / DSM 1617 / JCM 11322 / P2) (Sulfolobus solfataricus).